The chain runs to 52 residues: Transmembrane protein ORF52 (52 aa).

The next 2 helical transmembrane spans lie at 11–31 and 32–52; these read AFLGVLNALAPIIEGATEIIT and FMALTYVMTMVIARILGGLFV.

Its subcellular location is the host membrane. This Acidianus filamentous virus 1 (isolate United States/Yellowstone) (AFV-1) protein is Transmembrane protein ORF52.